Reading from the N-terminus, the 904-residue chain is MKRKMLWSSLIVILFVCILFLNKIVDFIINVEWYKEVGYLTVYFTKLIAICKLMIPLFIIIYISIVLYWRSLRLSIIKYRRAFEVNNDKVKNEKRIFIIVNLIVSFLFSYAFAATYWYRILQFNNSVPFNIKDPILNLDVSFYIFKLPLIQSLHSMILSLIIFLGLITLVTYFTLSVKDKVIWRNFKKDSGKIDILNSGITRFAGKQLAVLAALVMICVSIGYILKCIGLVYSQKGVTFGAGYTDAHVSLLLYKIIAAASIISAVIIFISILVSKVKPIIVSITVIVALILIKSLSYTVVQNFIVKSNQKTLEQPYIKYNIDYTRKAFNIENIDANPFQVKDNLTSQDIDNNMDTINNIRINSFEPTLEFYNQVQIIRYYYKFNNIDVDRYNINGKFNQIFIGTREINTKAIDPNTWQNRHLIYTHGYGIVMNKVNSVTSEGQPNFVIKDMPPQNSTDIKLDNARIYFGEKTDDYAIVDTKLKEFDYPKGSENATNNYDGSAGIKLGFINRILFAINQKDINFLLSRDILKESKILINRSIKDRVSKIAPFLNYDSDPYIVMSGGKLYWILDGYTVSDRYPFAQPQNNLNYIRNSVKVTVDAENGNVNFYIMDKSDPIVQSYAKIFPDLFKDINKLPSDIVQHFKYPKDLFNIQCSVLGKYHVTDPGVFYSGEDLWEVAKNQKQVSGEKYSMESSYMVMKLPNEQKEEMILLQYFNMRDKDNMVALFGARMDGENYGKMVLYKFPAEKTVYSPYLFKQKLNQDTTISSQLSLWNKDGSEVQFGDTIIVPINQSLVYVEPMYLRASGKEGIPEMKRVIVSYSDKMVLAESIDDALQQIFSYKQDYNQENSNESQIETPSYDINAEKLKEAKSLYEQALEAQKNGDWSKYGENIKKLGDIIDSLQK.

7 helical membrane-spanning segments follow: residues Ser-9–Ile-29, Leu-47–Leu-67, Ile-96–Tyr-116, Ile-157–Val-177, Leu-208–Ile-228, Tyr-253–Val-273, and Ile-279–Val-299.

This sequence belongs to the UPF0182 family.

The protein localises to the cell membrane. In Clostridium kluyveri (strain ATCC 8527 / DSM 555 / NBRC 12016 / NCIMB 10680 / K1), this protein is UPF0182 protein CKL_0015.